The sequence spans 338 residues: Ribosomal RNA small subunit methyltransferase C (338 aa).

It belongs to the methyltransferase superfamily. RsmC family. Monomer.

The protein resides in the cytoplasm. The catalysed reaction is guanosine(1207) in 16S rRNA + S-adenosyl-L-methionine = N(2)-methylguanosine(1207) in 16S rRNA + S-adenosyl-L-homocysteine + H(+). Functionally, specifically methylates the guanine in position 1207 of 16S rRNA in the 30S particle. The protein is Ribosomal RNA small subunit methyltransferase C of Photorhabdus laumondii subsp. laumondii (strain DSM 15139 / CIP 105565 / TT01) (Photorhabdus luminescens subsp. laumondii).